Consider the following 496-residue polypeptide: MAVAAPRKTEYEAIIGLETHCQLNTASKIFCHCSTKFDSDPNSNVCPVCLGYPGVLPVLNEKVLESAVKMGLALKAKISPYSKFDRKQYFYPDLPKNYQISQFDLPIVEHGHLEIEIADKPSDPPVKKTIGVTRLHMEEDAGKLVHAGSDRLAGSTYSKVDFNRTGIPLLEIVSEPDIRSGKEAAEYAQELRRLVRYLGIGDGNMQEGSLRCDVNISIRPVGQEEFGTKVEIKNMNSFSAIQKAIDYEIERQIKAVETGEPIYQETRLWDESSQRTFSMRKKEGSSDYRYFPEPDLPPIEVTPAQLEKWAAELPETPAQKRERYETEYGLSSYDTRVLTDDRDVAEYFEAAVAAGADPKQVTNWVTQDIAAHLNKNVGLTIVELPLKATQLAELVNLIHDGTISGKIAKEILPELLEQGGSPKAIVESRGLTQISDTGALEAMVDEVLAANPEKVEQFRAGKTKLQGFFVGQLMKKTSGRADPKLLNQILAQKLRG.

It belongs to the GatB/GatE family. GatB subfamily. In terms of assembly, heterotrimer of A, B and C subunits.

It catalyses the reaction L-glutamyl-tRNA(Gln) + L-glutamine + ATP + H2O = L-glutaminyl-tRNA(Gln) + L-glutamate + ADP + phosphate + H(+). The catalysed reaction is L-aspartyl-tRNA(Asn) + L-glutamine + ATP + H2O = L-asparaginyl-tRNA(Asn) + L-glutamate + ADP + phosphate + 2 H(+). Its function is as follows. Allows the formation of correctly charged Asn-tRNA(Asn) or Gln-tRNA(Gln) through the transamidation of misacylated Asp-tRNA(Asn) or Glu-tRNA(Gln) in organisms which lack either or both of asparaginyl-tRNA or glutaminyl-tRNA synthetases. The reaction takes place in the presence of glutamine and ATP through an activated phospho-Asp-tRNA(Asn) or phospho-Glu-tRNA(Gln). The chain is Aspartyl/glutamyl-tRNA(Asn/Gln) amidotransferase subunit B from Picosynechococcus sp. (strain ATCC 27264 / PCC 7002 / PR-6) (Agmenellum quadruplicatum).